A 910-amino-acid polypeptide reads, in one-letter code: 2-oxoglutarate dehydrogenase E1 component (910 aa).

The protein belongs to the alpha-ketoglutarate dehydrogenase family. As to quaternary structure, homodimer. Part of the 2-oxoglutarate dehydrogenase (OGDH) complex composed of E1 (2-oxoglutarate dehydrogenase), E2 (dihydrolipoamide succinyltransferase) and E3 (dihydrolipoamide dehydrogenase); the complex contains multiple copies of the three enzymatic components (E1, E2 and E3). The cofactor is thiamine diphosphate.

It catalyses the reaction N(6)-[(R)-lipoyl]-L-lysyl-[protein] + 2-oxoglutarate + H(+) = N(6)-[(R)-S(8)-succinyldihydrolipoyl]-L-lysyl-[protein] + CO2. E1 component of the 2-oxoglutarate dehydrogenase (OGDH) complex which catalyzes the decarboxylation of 2-oxoglutarate, the first step in the conversion of 2-oxoglutarate to succinyl-CoA and CO(2). This Staphylococcus aureus (strain N315) protein is 2-oxoglutarate dehydrogenase E1 component.